A 151-amino-acid polypeptide reads, in one-letter code: 3-hydroxyacyl-[acyl-carrier-protein] dehydratase FabZ (151 aa).

The active site involves H58.

This sequence belongs to the thioester dehydratase family. FabZ subfamily.

The protein localises to the cytoplasm. It carries out the reaction a (3R)-hydroxyacyl-[ACP] = a (2E)-enoyl-[ACP] + H2O. Functionally, involved in unsaturated fatty acids biosynthesis. Catalyzes the dehydration of short chain beta-hydroxyacyl-ACPs and long chain saturated and unsaturated beta-hydroxyacyl-ACPs. The protein is 3-hydroxyacyl-[acyl-carrier-protein] dehydratase FabZ of Histophilus somni (strain 129Pt) (Haemophilus somnus).